The primary structure comprises 488 residues: Glutamyl-tRNA(Gln) amidotransferase subunit A (488 aa).

Catalysis depends on charge relay system residues lysine 78 and serine 153. Residue serine 177 is the Acyl-ester intermediate of the active site.

It belongs to the amidase family. GatA subfamily. Heterotrimer of A, B and C subunits.

It carries out the reaction L-glutamyl-tRNA(Gln) + L-glutamine + ATP + H2O = L-glutaminyl-tRNA(Gln) + L-glutamate + ADP + phosphate + H(+). Functionally, allows the formation of correctly charged Gln-tRNA(Gln) through the transamidation of misacylated Glu-tRNA(Gln) in organisms which lack glutaminyl-tRNA synthetase. The reaction takes place in the presence of glutamine and ATP through an activated gamma-phospho-Glu-tRNA(Gln). The sequence is that of Glutamyl-tRNA(Gln) amidotransferase subunit A from Solidesulfovibrio magneticus (strain ATCC 700980 / DSM 13731 / RS-1) (Desulfovibrio magneticus).